A 319-amino-acid chain; its full sequence is BTB/POZ domain-containing adapter for CUL3-mediated RhoA degradation protein 2 (319 aa).

Residues 31-99 (KYIRLNVGGC…LRDDTIALPK (69 aa)) form the BTB domain.

This sequence belongs to the BACURD family. Component of the BCR(TNFAIP1) E3 ubiquitin ligase complex, at least composed of cul3, tnfaip1/bacurd2 and rbx1.

Its subcellular location is the cytoplasm. The protein localises to the nucleus. The protein resides in the endosome. Its pathway is protein modification; protein ubiquitination. Functionally, substrate-specific adapter of a BCR (BTB-CUL3-RBX1) E3 ubiquitin-protein ligase complex involved in regulation of cytoskeleton structure. The BCR(TNFAIP1) E3 ubiquitin ligase complex mediates the ubiquitination of target proteins, leading to their degradation by the proteasome. The polypeptide is BTB/POZ domain-containing adapter for CUL3-mediated RhoA degradation protein 2 (tnfaip1) (Xenopus laevis (African clawed frog)).